Consider the following 825-residue polypeptide: AMP deaminase 2 (825 aa).

A disordered region spans residues 1–49 (MASYPSGSGKPKAKYPFKKRASLQASTAAPEARGGLGAPPLQSARSLPG). Over residues 11–21 (PKAKYPFKKRA) the composition is skewed to basic residues. At serine 22 the chain carries Phosphoserine. Arginine 45 is subject to Omega-N-methylarginine. Phosphoserine is present on residues serine 46, serine 64, and serine 80. Tyrosine 91 is subject to Phosphotyrosine. A phosphoserine mark is found at serine 97 and serine 114. Phosphothreonine is present on threonine 134. Phosphoserine occurs at positions 136 and 138. Zn(2+)-binding residues include histidine 364 and histidine 366. Substrate-binding positions include histidine 366 and 435 to 440 (KFNAKY). Histidine 633 is a binding site for Zn(2+). Glutamate 636 provides a ligand contact to substrate. Histidine 655 acts as the Proton acceptor in catalysis. Residue aspartate 710 participates in Zn(2+) binding. 711 to 714 (DPLQ) contributes to the substrate binding site.

The protein belongs to the metallo-dependent hydrolases superfamily. Adenosine and AMP deaminases family. Homotetramer. It depends on Zn(2+) as a cofactor. Highly expressed in cerebellum.

It carries out the reaction AMP + H2O + H(+) = IMP + NH4(+). It functions in the pathway purine metabolism; IMP biosynthesis via salvage pathway; IMP from AMP: step 1/1. AMP deaminase plays a critical role in energy metabolism. Catalyzes the deamination of AMP to IMP and plays an important role in the purine nucleotide cycle. The chain is AMP deaminase 2 from Homo sapiens (Human).